The chain runs to 194 residues: Peptidyl-tRNA hydrolase (194 aa).

Residue Tyr17 coordinates tRNA. His22 acts as the Proton acceptor in catalysis. The tRNA site is built by Tyr68, Asn70, and Asn115.

The protein belongs to the PTH family. In terms of assembly, monomer.

The protein localises to the cytoplasm. The catalysed reaction is an N-acyl-L-alpha-aminoacyl-tRNA + H2O = an N-acyl-L-amino acid + a tRNA + H(+). Hydrolyzes ribosome-free peptidyl-tRNAs (with 1 or more amino acids incorporated), which drop off the ribosome during protein synthesis, or as a result of ribosome stalling. Functionally, catalyzes the release of premature peptidyl moieties from peptidyl-tRNA molecules trapped in stalled 50S ribosomal subunits, and thus maintains levels of free tRNAs and 50S ribosomes. In Pseudoalteromonas atlantica (strain T6c / ATCC BAA-1087), this protein is Peptidyl-tRNA hydrolase.